Reading from the N-terminus, the 293-residue chain is Coatomer subunit epsilon-2 (293 aa).

This sequence belongs to the COPE family. Oligomeric complex that consists of at least the alpha, beta, beta', gamma, delta, epsilon and zeta subunits.

The protein resides in the cytoplasm. Its subcellular location is the golgi apparatus membrane. It localises to the cytoplasmic vesicle. It is found in the COPI-coated vesicle membrane. Its function is as follows. The coatomer is a cytosolic protein complex that binds to dilysine motifs and reversibly associates with Golgi non-clathrin-coated vesicles, which further mediate biosynthetic protein transport from the ER, via the Golgi up to the trans Golgi network. The coatomer complex is required for budding from Golgi membranes, and is essential for the retrograde Golgi-to-ER transport of dilysine-tagged proteins. This Arabidopsis thaliana (Mouse-ear cress) protein is Coatomer subunit epsilon-2.